Here is a 246-residue protein sequence, read N- to C-terminus: DNA repair protein RecO (246 aa).

This sequence belongs to the RecO family.

Its function is as follows. Involved in DNA repair and RecF pathway recombination. The sequence is that of DNA repair protein RecO from Marinobacter nauticus (strain ATCC 700491 / DSM 11845 / VT8) (Marinobacter aquaeolei).